A 56-amino-acid chain; its full sequence is Small ribosomal subunit protein uS14 (56 aa).

Ser-9 bears the Phosphoserine mark. Arg-12 is modified (omega-N-methylarginine). Residues Cys-21, Cys-24, Cys-39, and Cys-42 each coordinate Zn(2+). The residue at position 48 (Lys-48) is an N6-acetyllysine.

This sequence belongs to the universal ribosomal protein uS14 family. In terms of assembly, component of the 40S small ribosomal subunit. Requires Zn(2+) as cofactor.

Its subcellular location is the cytoplasm. It is found in the cytosol. The protein localises to the rough endoplasmic reticulum. Functionally, component of the small ribosomal subunit. The ribosome is a large ribonucleoprotein complex responsible for the synthesis of proteins in the cell. This is Small ribosomal subunit protein uS14 (Rps29) from Mus musculus (Mouse).